A 674-amino-acid polypeptide reads, in one-letter code: U-box domain-containing protein 16 (674 aa).

Residues 273-347 enclose the U-box domain; it reads NIPADFRCPI…VLWCRDQKIP (75 aa). ARM repeat units follow at residues 399-438, 441-481, and 484-523; these read TVAR…NLSI, QNKT…SLAG, and AYRR…NLVA.

It catalyses the reaction S-ubiquitinyl-[E2 ubiquitin-conjugating enzyme]-L-cysteine + [acceptor protein]-L-lysine = [E2 ubiquitin-conjugating enzyme]-L-cysteine + N(6)-ubiquitinyl-[acceptor protein]-L-lysine.. It participates in protein modification; protein ubiquitination. Functions as an E3 ubiquitin ligase. The chain is U-box domain-containing protein 16 (PUB16) from Arabidopsis thaliana (Mouse-ear cress).